The chain runs to 54 residues: Large ribosomal subunit protein bL33 (54 aa).

This sequence belongs to the bacterial ribosomal protein bL33 family.

The polypeptide is Large ribosomal subunit protein bL33 (Parafrankia sp. (strain EAN1pec)).